The following is a 109-amino-acid chain: Cell division protein ZapA (109 aa).

The stretch at 21–97 forms a coiled coil; it reads PDQRDALNQA…QTIEQALLDQ (77 aa).

The protein belongs to the ZapA family. Type 1 subfamily. As to quaternary structure, homodimer. Interacts with FtsZ.

The protein localises to the cytoplasm. Activator of cell division through the inhibition of FtsZ GTPase activity, therefore promoting FtsZ assembly into bundles of protofilaments necessary for the formation of the division Z ring. It is recruited early at mid-cell but it is not essential for cell division. The polypeptide is Cell division protein ZapA (Salmonella agona (strain SL483)).